Reading from the N-terminus, the 588-residue chain is MATCSAYLCCPATSASLKKRVFPDGSAGFLFFGGRRLSNRLVTPKSVIRADLNSMVSDMSTNAPKGLFPPEPEHYRGPKLKVAIIGAGLAGMSTAVELLDQGHEVDIYESRTFIGGKVGSFVDKRGNHIEMGLHVFFGCYNNLFRLMKKVGAEKNLLVKEHTHTFVNKGGEIGELDFRFPVGAPLHGINAFLSTNQLKTYDKARNAVALALSPVVRALVDPDGALQQIRDLDSVSFSDWFMSKGGTRASIQRMWDPVAYALGFIDCDNISARCMLTIFALFATKTEASLLRMLKGSPDVYLSGPIKKYIIDKGGRFHLRWGCREVLYETSSDGSMYVSGLAMSKATQKKIVKADAYVAACVVPGIKRLVPQKWRELEFFGNIYKLIGVPVVTVQLRYNGWVTELQDLERSRQSKRATGLDNLLYTPDADFSCFADLALASPEDYYIEGQGSLLQCVLTPGDPYMPLPNEEIIRRVSKQVLALFPSSQGLEVTWSSVVKIGQSLYREGPGKDPFRPDQKTPVENFFLAGSYTKQDYIDSMEGATLSGRQASAYICDAGEQLLALRKKIAAAELNEISKGVSLSDELSLV.

A chloroplast and chromoplast-targeting transit peptide spans 1-49 (MATCSAYLCCPATSASLKKRVFPDGSAGFLFFGGRRLSNRLVTPKSVIR).

It belongs to the zeta carotene desaturase family. As to quaternary structure, monomer and dimer. Decylplastoquinone serves as cofactor. 6-decylubiquinone is required as a cofactor.

It is found in the plastid. It localises to the chloroplast. The protein resides in the chromoplast. It carries out the reaction 9,9'-di-cis-zeta-carotene + 2 a quinone = 7,7',9,9'-tetra-cis-lycopene + 2 a quinol. It functions in the pathway carotenoid biosynthesis; lycopene biosynthesis. Functionally, catalyzes the conversion of zeta-carotene to lycopene via the intermediary of neurosporene. It carries out two consecutive desaturations (introduction of double bonds) at positions C-7 and C-7'. Shows stereoselectivity toward trans C15-C15'zeta-carotene double bond. The zeta-carotene produced by the phytoene desaturase PDS has a C15-C15' double bond in the cis configuration and it requires isomerization before being recognized as substrate by ZDS. No activity with all-trans-zeta-carotene. The main product is 7,9,7',9'-tetra-cis-lycopene (pro-lycopene). The chain is Zeta-carotene desaturase, chloroplastic/chromoplastic (ZDS) from Capsicum annuum (Capsicum pepper).